Here is an 84-residue protein sequence, read N- to C-terminus: Small ribosomal subunit protein bS18 (84 aa).

Belongs to the bacterial ribosomal protein bS18 family. Part of the 30S ribosomal subunit. Forms a tight heterodimer with protein bS6.

In terms of biological role, binds as a heterodimer with protein bS6 to the central domain of the 16S rRNA, where it helps stabilize the platform of the 30S subunit. This is Small ribosomal subunit protein bS18 from Maricaulis maris (strain MCS10) (Caulobacter maris).